The following is a 79-amino-acid chain: uncharacterized protein (79 aa).

This is an uncharacterized protein from Homo sapiens (Human).